A 107-amino-acid chain; its full sequence is Late embryogenesis abundant protein M10 (107 aa).

The signal sequence occupies residues 1–19 (MGNLMSLVLVALLFSLSLA).

Its function is as follows. May be involved in the acquisition of desiccation tolerance during late phase of embryogenesis. This is Late embryogenesis abundant protein M10 from Arabidopsis thaliana (Mouse-ear cress).